Reading from the N-terminus, the 207-residue chain is Transcription factor bHLH149 (207 aa).

Positions 1 to 25 (MVESLFPSIENTGESSRRKKPRISE) are disordered. One can recognise a bHLH domain in the interval 132-181 (KSRKGLTETNRIKLPAVERKLKILGRLVPGCRKVSVPNLLDEATDYIAAL).

In terms of assembly, homodimer. Interacts with PRE3.

It is found in the nucleus. Functionally, atypical bHLH transcription factor probably unable to bind DNA. Negatively regulates brassinosteroid signaling. The protein is Transcription factor bHLH149 (BHLH149) of Arabidopsis thaliana (Mouse-ear cress).